Here is a 60-residue protein sequence, read N- to C-terminus: Large ribosomal subunit protein bL32 (60 aa).

The tract at residues 1-60 (MAVQQNKKTPSKRGMHRSHDFLVAPQLSVEQTTGETHMRHHISPNGFYRGRKVLKTKNDE) is disordered. Residues 49–60 (RGRKVLKTKNDE) show a composition bias toward basic residues.

It belongs to the bacterial ribosomal protein bL32 family.

This is Large ribosomal subunit protein bL32 from Herminiimonas arsenicoxydans.